A 615-amino-acid polypeptide reads, in one-letter code: DNA mismatch repair protein MutL (615 aa).

The segment covering 378 to 391 has biased composition (low complexity); it reads PAPASGSRPAAPWP. Positions 378-397 are disordered; the sequence is PAPASGSRPAAPWPNAQPGY.

The protein belongs to the DNA mismatch repair MutL/HexB family.

This protein is involved in the repair of mismatches in DNA. It is required for dam-dependent methyl-directed DNA mismatch repair. May act as a 'molecular matchmaker', a protein that promotes the formation of a stable complex between two or more DNA-binding proteins in an ATP-dependent manner without itself being part of a final effector complex. This chain is DNA mismatch repair protein MutL, found in Escherichia coli O127:H6 (strain E2348/69 / EPEC).